Consider the following 131-residue polypeptide: Small ribosomal subunit protein uS8 (131 aa).

This sequence belongs to the universal ribosomal protein uS8 family. As to quaternary structure, part of the 30S ribosomal subunit. Contacts proteins S5 and S12.

Functionally, one of the primary rRNA binding proteins, it binds directly to 16S rRNA central domain where it helps coordinate assembly of the platform of the 30S subunit. This Sulfurovum sp. (strain NBC37-1) protein is Small ribosomal subunit protein uS8.